The primary structure comprises 467 residues: Solute carrier family 52, riboflavin transporter, member 3 (467 aa).

Over 1 to 2 (MA) the chain is Cytoplasmic. A helical membrane pass occupies residues 3 to 23 (FLIHLLVCTFGMGSWVAINGL). Residues 24 to 43 (WVELPLLVTELPEGWYLPSY) are Extracellular-facing. The chain crosses the membrane as a helical span at residues 44–64 (LTVIIQLANVGPLLVTLLHHF). Over 65 to 71 (RPGCLSE) the chain is Cytoplasmic. The helical transmembrane segment at 72-92 (VAVVFTVLGVGTIACTLFAFL) threads the bilayer. Residues 93–105 (WNVTSWVLGSRHS) lie on the Extracellular side of the membrane. N-linked (GlcNAc...) asparagine glycosylation occurs at asparagine 94. Residues 106 to 126 (IAFLVLTFFLALVDCTSSVTF) form a helical membrane-spanning segment. The Cytoplasmic segment spans residues 127–137 (LPFMSRLPTYY). The chain crosses the membrane as a helical span at residues 138-158 (LTTFFVGEGLSGLLPALVALA). Over 159 to 220 (QGSGLTTCVN…SRYLPANFSP (62 aa)) the chain is Extracellular. A glycan (N-linked (GlcNAc...) asparagine) is linked at asparagine 168. Residues 221 to 241 (LVFFLLLSFMMACCFISFFFL) form a helical membrane-spanning segment. Residues 242 to 294 (QRQPKRWEASIEDLLTSQVTLNSIRPQEGKDLGPPEESGKAQDPPEEKTAPQH) are Cytoplasmic-facing. Serine 251 bears the Phosphoserine mark. A disordered region spans residues 266–288 (RPQEGKDLGPPEESGKAQDPPEE). The span at 268–288 (QEGKDLGPPEESGKAQDPPEE) shows a compositional bias: basic and acidic residues. Residues 295 to 315 (LAHLTFIYVLVAFVNALTNGV) form a helical membrane-spanning segment. Residues 316-333 (LPSVQTYSCLSYGPVAYH) are Extracellular-facing. The helical transmembrane segment at 334 to 354 (LSATLSSMASPLTCFLSIFLP) threads the bilayer. The Cytoplasmic segment spans residues 355–359 (NRSLP). The helical transmembrane segment at 360-380 (FLGVLAVLGTSFGAYNMAMAV) threads the bilayer. The Extracellular segment spans residues 381–394 (MSPCPFMQGHWGGE). Residues 395–415 (VLIVVSWVLFTGCLSYVKVML) traverse the membrane as a helical segment. Topologically, residues 416–425 (GVILRDHSRS) are cytoplasmic. Residues 426–446 (ALLWCGAAVQLGSLLGAVVMF) form a helical membrane-spanning segment. Residues 447-467 (PLVNVLRLFSSADFCSLQCSA) are Extracellular-facing.

This sequence belongs to the riboflavin transporter family.

It is found in the cell membrane. The catalysed reaction is riboflavin(in) = riboflavin(out). Plasma membrane transporter mediating the uptake by cells of the water soluble vitamin B2/riboflavin that plays a key role in biochemical oxidation-reduction reactions of the carbohydrate, lipid, and amino acid metabolism. This chain is Solute carrier family 52, riboflavin transporter, member 3 (SLC52A3), found in Bos taurus (Bovine).